A 442-amino-acid chain; its full sequence is MASVVLPSGSQCAAAAAAAAPPGLRLRLLLLLFSAAALIPTGDGQNLFTKDVTVIEGEVATISCQVNKSDDSVIQLLNPNRQTIYFRDFRPLKDSRFQLLNFSSSELKVSLTNVSISDEGRYFCQLYTDPPQESYTTITVLVPPRNLMIDIQKDTAVEGEEIEVNCTAMASKPATTIRWFKGNTELKGKSEVEEWSDMYTVTSQLMLKVHKEDDGVPVICQVEHPAVTGNLQTQRYLEVQYKPQVHIQMTYPLQGLTREGDALELTCEAIGKPQPVMVTWVRVDDEMPQHAVLSGPNLFINNLNKTDNGTYRCEASNIVGKAHSDYMLYVYDPPTTIPPPTTTTTTTTTTTTTILTIITDSRAGEEGSIRAVDHAVIGGVVAVVVFAMLCLLIILGRYFARHKGTYFTHEAKGADDAADADTAIINAEGGQNNSEEKKEYFI.

Positions 1–44 (MASVVLPSGSQCAAAAAAAAPPGLRLRLLLLLFSAAALIPTGDG) are cleaved as a signal peptide. Residues 45–139 (QNLFTKDVTV…PPQESYTTIT (95 aa)) form the Ig-like V-type domain. At 45 to 374 (QNLFTKDVTV…EEGSIRAVDH (330 aa)) the chain is on the extracellular side. A disulfide bridge connects residues Cys64 and Cys124. Asn67, Asn101, Asn113, and Asn165 each carry an N-linked (GlcNAc...) asparagine glycan. Ig-like C2-type domains are found at residues 144-238 (PRNL…RYLE) and 243-329 (PQVH…YMLY). Intrachain disulfides connect Cys166/Cys220 and Cys267/Cys313. N-linked (GlcNAc...) asparagine glycans are attached at residues Asn304 and Asn308. Residues 375 to 395 (AVIGGVVAVVVFAMLCLLIIL) form a helical membrane-spanning segment. At 396–442 (GRYFARHKGTYFTHEAKGADDAADADTAIINAEGGQNNSEEKKEYFI) the chain is on the cytoplasmic side. At Thr422 the chain carries Phosphothreonine. At Ser434 the chain carries Phosphoserine.

It belongs to the nectin family. In terms of assembly, homodimer (via Ig-like V-type domain). Interacts with FARP1. Interacts (via Ig-like V-type domain) with CRTAM (via Ig-like V-type domain); the interaction competes with CRTAM homodimerization and CADM1 homodimerization. Interacts (via C-terminus) with EPB41L3/DAL1. The interaction with EPB41L3/DAL1 may act to anchor CADM1 to the actin cytoskeleton. Interacts (via C-terminus) with MPP2 (via PDZ domain). Interacts (via C-terminus) with MPP3 (via PDZ domain); this interaction connects CADM1 with DLG1. Interacts (via C-terminus) with PALS2 (via PDZ domain). As to quaternary structure, (Microbial infection) Interacts with herpes virus 8 proteins vFLIP and vGPCR; these interactions are essential for NF-kappa-B activation. In terms of processing, glycosylation at Asn-67 and Asn-101 promotes adhesive binding and synapse induction.

It is found in the cell membrane. The protein resides in the synapse. Its function is as follows. Mediates homophilic cell-cell adhesion in a Ca(2+)-independent manner. Also mediates heterophilic cell-cell adhesion with CADM3 and NECTIN3 in a Ca(2+)-independent manner. Interaction with CRTAM promotes natural killer (NK) cell cytotoxicity and interferon-gamma (IFN-gamma) secretion by CD8+ cells in vitro as well as NK cell-mediated rejection of tumors expressing CADM1 in vivo. In mast cells, may mediate attachment to and promote communication with nerves. CADM1, together with MITF, is essential for development and survival of mast cells in vivo. By interacting with CRTAM and thus promoting the adhesion between CD8+ T-cells and CD8+ dendritic cells, regulates the retention of activated CD8+ T-cell within the draining lymph node. Required for the intestinal retention of intraepithelial CD4+ CD8+ T-cells and, to a lesser extent, intraepithelial and lamina propria CD8+ T-cells and CD4+ T-cells. Interaction with CRTAM promotes the adhesion to gut-associated CD103+ dendritic cells, which may facilitate the expression of gut-homing and adhesion molecules on T-cells and the conversion of CD4+ T-cells into CD4+ CD8+ T-cells. Acts as a synaptic cell adhesion molecule and plays a role in the formation of dendritic spines and in synapse assembly. May be involved in neuronal migration, axon growth, pathfinding, and fasciculation on the axons of differentiating neurons. May play diverse roles in the spermatogenesis including in the adhesion of spermatocytes and spermatids to Sertoli cells and for their normal differentiation into mature spermatozoa. Acts as a tumor suppressor in non-small-cell lung cancer (NSCLC) cells. May contribute to the less invasive phenotypes of lepidic growth tumor cells. In terms of biological role, (Microbial infection) Induces cell fusion in neuron infected by a neuropathogenic strain of measles. Interacts with measles hemagglutinin to trigger hyperfusogenic F-mediated membrane fusion and presumably transsynaptic cell-to-cell transmission of the virus. The polypeptide is Cell adhesion molecule 1 (Homo sapiens (Human)).